A 275-amino-acid chain; its full sequence is uncharacterized protein (275 aa).

The ABC transmembrane type-1 domain occupies 1–162 (NLFSVIVSLI…ITSYWTEVQR (162 aa)). 3 helical membrane passes run 21–41 (LYLV…GNIM), 106–126 (IMNL…YYLM), and 137–157 (FAYV…TSYW).

The protein resides in the cell membrane. This is an uncharacterized protein from Staphylococcus epidermidis.